The chain runs to 387 residues: Pepsin-3 (387 aa).

An N-terminal signal peptide occupies residues 1-15 (MKWLLLLGLLALSEC). Residues 16-59 (IIHKVPLVRKKSLRKNLIEKGLLKDYLKTHTPNLATKYLPKAAF) constitute a propeptide, activation peptide. The Peptidase A1 domain maps to 75-384 (YFGTIGIGTP…DRANNQLGLA (310 aa)). The active site involves Asp93. 2 disulfide bridges follow: Cys106-Cys111 and Cys267-Cys271. Residue Asp276 is part of the active site. Cys310 and Cys343 form a disulfide bridge.

Belongs to the peptidase A1 family.

Its subcellular location is the secreted. It carries out the reaction Preferential cleavage: hydrophobic, preferably aromatic, residues in P1 and P1' positions. Cleaves 1-Phe-|-Val-2, 4-Gln-|-His-5, 13-Glu-|-Ala-14, 14-Ala-|-Leu-15, 15-Leu-|-Tyr-16, 16-Tyr-|-Leu-17, 23-Gly-|-Phe-24, 24-Phe-|-Phe-25 and 25-Phe-|-Tyr-26 bonds in the B chain of insulin.. Shows particularly broad specificity; although bonds involving phenylalanine and leucine are preferred, many others are also cleaved to some extent. The sequence is that of Pepsin-3 from Oryctolagus cuniculus (Rabbit).